The following is a 692-amino-acid chain: Elongation factor G (692 aa).

In terms of domain architecture, tr-type G spans 8–283; it reads EDYRNFGIMA…AVVDYLPSPL (276 aa). Residues 17-24, 81-85, and 135-138 contribute to the GTP site; these read AHIDAGKT, DTPGH, and NKMD.

The protein belongs to the TRAFAC class translation factor GTPase superfamily. Classic translation factor GTPase family. EF-G/EF-2 subfamily.

The protein localises to the cytoplasm. Functionally, catalyzes the GTP-dependent ribosomal translocation step during translation elongation. During this step, the ribosome changes from the pre-translocational (PRE) to the post-translocational (POST) state as the newly formed A-site-bound peptidyl-tRNA and P-site-bound deacylated tRNA move to the P and E sites, respectively. Catalyzes the coordinated movement of the two tRNA molecules, the mRNA and conformational changes in the ribosome. The polypeptide is Elongation factor G (Caulobacter sp. (strain K31)).